The sequence spans 753 residues: Protein transport protein SEC23-1 (753 aa).

Cys-56, Cys-61, Cys-80, and Cys-83 together coordinate Zn(2+).

This sequence belongs to the SEC23/SEC24 family. SEC23 subfamily. As to quaternary structure, the COPII coat is composed of at least 5 proteins: the SEC23/24 complex, the SEC13/31 complex, and the protein SAR1.

It localises to the cytoplasm. The protein localises to the cytoplasmic vesicle. The protein resides in the COPII-coated vesicle membrane. It is found in the endoplasmic reticulum membrane. Its subcellular location is the golgi apparatus membrane. Functionally, component of the coat protein complex II (COPII) which promotes the formation of transport vesicles from the endoplasmic reticulum (ER). The coat has two main functions, the physical deformation of the endoplasmic reticulum membrane into vesicles and the selection of cargo molecules. The chain is Protein transport protein SEC23-1 (SEC231) from Candida glabrata (strain ATCC 2001 / BCRC 20586 / JCM 3761 / NBRC 0622 / NRRL Y-65 / CBS 138) (Yeast).